A 203-amino-acid polypeptide reads, in one-letter code: Nucleoside triphosphate pyrophosphatase (203 aa).

The active-site Proton acceptor is aspartate 78.

Belongs to the Maf family. A divalent metal cation serves as cofactor.

It localises to the cytoplasm. It catalyses the reaction a ribonucleoside 5'-triphosphate + H2O = a ribonucleoside 5'-phosphate + diphosphate + H(+). The catalysed reaction is a 2'-deoxyribonucleoside 5'-triphosphate + H2O = a 2'-deoxyribonucleoside 5'-phosphate + diphosphate + H(+). In terms of biological role, nucleoside triphosphate pyrophosphatase. May have a dual role in cell division arrest and in preventing the incorporation of modified nucleotides into cellular nucleic acids. The polypeptide is Nucleoside triphosphate pyrophosphatase (Prochlorococcus marinus (strain MIT 9301)).